The primary structure comprises 294 residues: Small ribosomal subunit protein uS2 (294 aa).

Residues 261 to 274 (MDEDADSKKSKAEE) show a composition bias toward basic and acidic residues. Residues 261-294 (MDEDADSKKSKAEEPVIPTAEEPAITTIEVDQNE) are disordered.

It belongs to the universal ribosomal protein uS2 family.

The sequence is that of Small ribosomal subunit protein uS2 from Leptospira borgpetersenii serovar Hardjo-bovis (strain JB197).